A 125-amino-acid chain; its full sequence is Homeobox protein HD-8 (125 aa).

A DNA-binding region (homeobox) is located at residues 30-89; that stretch reads EPDTRTRKTTFQMMVLKEVFKIAPHPSTLTKADLALMIKLPLKAVQIWFQNERSRKERGG.

Its subcellular location is the nucleus. This is Homeobox protein HD-8 (HD-8) from Encephalitozoon cuniculi (strain GB-M1) (Microsporidian parasite).